A 1193-amino-acid chain; its full sequence is Nucleolar protein 6 (1193 aa).

Disordered regions lie at residues 1–69 and 1137–1193; these read MRFV…TKNV and KREQ…KVLK. 2 stretches are compositionally biased toward basic and acidic residues: residues 31-46 and 1151-1161; these read AGDHSDLDEPKPKIAK and DANKAEEESKP. A Phosphoserine modification is found at Ser35. The segment covering 1162–1184 has biased composition (basic residues); that stretch reads KPKKHRQRKGTGKKALPKRKRLI.

The protein belongs to the NRAP family. As to quaternary structure, part of the small subunit (SSU) processome, composed of more than 70 proteins and the RNA chaperone small nucleolar RNA (snoRNA) U3. Expressed in nurse cells at stages 9-10 of oogenesis and exported to the oocyte.

The protein localises to the nucleus. Its subcellular location is the nucleolus. It is found in the chromosome. Its function is as follows. Part of the small subunit (SSU) processome, first precursor of the small eukaryotic ribosomal subunit. During the assembly of the SSU processome in the nucleolus, many ribosome biogenesis factors, an RNA chaperone and ribosomal proteins associate with the nascent pre-rRNA and work in concert to generate RNA folding, modifications, rearrangements and cleavage as well as targeted degradation of pre-ribosomal RNA by the RNA exosome. This chain is Nucleolar protein 6, found in Drosophila melanogaster (Fruit fly).